Consider the following 342-residue polypeptide: Anthranilate phosphoribosyltransferase (342 aa).

Residues Gly-84, 87–88 (GD), Thr-92, 94–97 (NIST), 112–120 (KHGGRSVSS), and Ser-124 contribute to the 5-phospho-alpha-D-ribose 1-diphosphate site. Anthranilate is bound at residue Gly-84. Ser-96 lines the Mg(2+) pocket. Position 170 (Arg-170) interacts with anthranilate. Residues Asp-229 and Glu-230 each contribute to the Mg(2+) site.

The protein belongs to the anthranilate phosphoribosyltransferase family. As to quaternary structure, homodimer. It depends on Mg(2+) as a cofactor.

It catalyses the reaction N-(5-phospho-beta-D-ribosyl)anthranilate + diphosphate = 5-phospho-alpha-D-ribose 1-diphosphate + anthranilate. It participates in amino-acid biosynthesis; L-tryptophan biosynthesis; L-tryptophan from chorismate: step 2/5. Its function is as follows. Catalyzes the transfer of the phosphoribosyl group of 5-phosphorylribose-1-pyrophosphate (PRPP) to anthranilate to yield N-(5'-phosphoribosyl)-anthranilate (PRA). This chain is Anthranilate phosphoribosyltransferase, found in Verminephrobacter eiseniae (strain EF01-2).